We begin with the raw amino-acid sequence, 242 residues long: Glucosamine-6-phosphate deaminase (242 aa).

The active-site Proton acceptor; for enolization step is the Asp67. The For ring-opening step role is filled by Asn136. Catalysis depends on His138, which acts as the Proton acceptor; for ring-opening step. The For ring-opening step role is filled by Glu143.

Belongs to the glucosamine/galactosamine-6-phosphate isomerase family. NagB subfamily.

It catalyses the reaction alpha-D-glucosamine 6-phosphate + H2O = beta-D-fructose 6-phosphate + NH4(+). The protein operates within amino-sugar metabolism; N-acetylneuraminate degradation; D-fructose 6-phosphate from N-acetylneuraminate: step 5/5. Catalyzes the reversible isomerization-deamination of glucosamine 6-phosphate (GlcN6P) to form fructose 6-phosphate (Fru6P) and ammonium ion. The polypeptide is Glucosamine-6-phosphate deaminase (Clostridium perfringens (strain ATCC 13124 / DSM 756 / JCM 1290 / NCIMB 6125 / NCTC 8237 / Type A)).